We begin with the raw amino-acid sequence, 253 residues long: GTP cyclohydrolase III 2 (253 aa).

A disordered region spans residues 102 to 125 (LRDAGSAQDENRQEALSHRSPPGF).

It belongs to the archaeal-type GTP cyclohydrolase family.

It catalyses the reaction GTP + 3 H2O = 2-amino-5-formylamino-6-(5-phospho-D-ribosylamino)pyrimidin-4(3H)-one + 2 phosphate + 2 H(+). Catalyzes the formation of 2-amino-5-formylamino-6-ribofuranosylamino-4(3H)-pyrimidinone ribonucleotide monophosphate and inorganic phosphate from GTP. Also has an independent pyrophosphate phosphohydrolase activity. The protein is GTP cyclohydrolase III 2 (gch32) of Halobacterium salinarum (strain ATCC 700922 / JCM 11081 / NRC-1) (Halobacterium halobium).